Reading from the N-terminus, the 62-residue chain is Guanine nucleotide-binding protein subunit gamma (62 aa).

Cys59 carries the cysteine methyl ester modification. Cys59 carries S-geranylgeranyl cysteine lipidation. Positions 60-62 are cleaved as a propeptide — removed in mature form; the sequence is SVL.

The protein belongs to the G protein gamma family. In terms of assembly, g proteins are composed of 3 units, alpha, beta and gamma. Interacts with gpb-1 and gpb-2.

Its subcellular location is the cell membrane. In terms of biological role, guanine nucleotide-binding proteins (G proteins) are involved as a modulator or transducer in various transmembrane signaling systems. The beta and gamma chains are required for the GTPase activity, for replacement of GDP by GTP, and for G protein-effector interaction. The polypeptide is Guanine nucleotide-binding protein subunit gamma (gpc-1) (Caenorhabditis briggsae).